Reading from the N-terminus, the 136-residue chain is Large ribosomal subunit protein uL16 (136 aa).

The protein belongs to the universal ribosomal protein uL16 family. Part of the 50S ribosomal subunit.

Its function is as follows. Binds 23S rRNA and is also seen to make contacts with the A and possibly P site tRNAs. The sequence is that of Large ribosomal subunit protein uL16 from Citrobacter koseri (strain ATCC BAA-895 / CDC 4225-83 / SGSC4696).